We begin with the raw amino-acid sequence, 101 residues long: Small ribosomal subunit protein uS14 (101 aa).

Belongs to the universal ribosomal protein uS14 family. Part of the 30S ribosomal subunit. Contacts proteins S3 and S10.

Binds 16S rRNA, required for the assembly of 30S particles and may also be responsible for determining the conformation of the 16S rRNA at the A site. The polypeptide is Small ribosomal subunit protein uS14 (Bordetella parapertussis (strain 12822 / ATCC BAA-587 / NCTC 13253)).